The primary structure comprises 264 residues: 5'-nucleotidase SurE (264 aa).

Residues aspartate 10, aspartate 11, serine 43, and asparagine 97 each coordinate a divalent metal cation.

The protein belongs to the SurE nucleotidase family. A divalent metal cation is required as a cofactor.

It localises to the cytoplasm. The catalysed reaction is a ribonucleoside 5'-phosphate + H2O = a ribonucleoside + phosphate. In terms of biological role, nucleotidase that shows phosphatase activity on nucleoside 5'-monophosphates. The protein is 5'-nucleotidase SurE of Sulfurimonas denitrificans (strain ATCC 33889 / DSM 1251) (Thiomicrospira denitrificans (strain ATCC 33889 / DSM 1251)).